The sequence spans 75 residues: Exodeoxyribonuclease 7 small subunit (75 aa).

It belongs to the XseB family. In terms of assembly, heterooligomer composed of large and small subunits.

It is found in the cytoplasm. It catalyses the reaction Exonucleolytic cleavage in either 5'- to 3'- or 3'- to 5'-direction to yield nucleoside 5'-phosphates.. In terms of biological role, bidirectionally degrades single-stranded DNA into large acid-insoluble oligonucleotides, which are then degraded further into small acid-soluble oligonucleotides. This Nostoc punctiforme (strain ATCC 29133 / PCC 73102) protein is Exodeoxyribonuclease 7 small subunit.